The following is a 156-amino-acid chain: Small ribosomal subunit protein uS7 (156 aa).

Belongs to the universal ribosomal protein uS7 family. As to quaternary structure, part of the 30S ribosomal subunit. Contacts proteins S9 and S11.

Functionally, one of the primary rRNA binding proteins, it binds directly to 16S rRNA where it nucleates assembly of the head domain of the 30S subunit. Is located at the subunit interface close to the decoding center, probably blocks exit of the E-site tRNA. The polypeptide is Small ribosomal subunit protein uS7 (Trichlorobacter lovleyi (strain ATCC BAA-1151 / DSM 17278 / SZ) (Geobacter lovleyi)).